Consider the following 340-residue polypeptide: Anthranilate phosphoribosyltransferase (340 aa).

Residues glycine 83, 86-87, threonine 91, 93-96, 111-119, and serine 123 contribute to the 5-phospho-alpha-D-ribose 1-diphosphate site; these read GD, NVST, and KHGNRSVSS. Position 83 (glycine 83) interacts with anthranilate. Serine 95 serves as a coordination point for Mg(2+). Residue asparagine 114 participates in anthranilate binding. An anthranilate-binding site is contributed by arginine 169. Mg(2+) is bound by residues aspartate 228 and glutamate 229.

The protein belongs to the anthranilate phosphoribosyltransferase family. As to quaternary structure, homodimer. Mg(2+) is required as a cofactor.

It carries out the reaction N-(5-phospho-beta-D-ribosyl)anthranilate + diphosphate = 5-phospho-alpha-D-ribose 1-diphosphate + anthranilate. It participates in amino-acid biosynthesis; L-tryptophan biosynthesis; L-tryptophan from chorismate: step 2/5. In terms of biological role, catalyzes the transfer of the phosphoribosyl group of 5-phosphorylribose-1-pyrophosphate (PRPP) to anthranilate to yield N-(5'-phosphoribosyl)-anthranilate (PRA). This is Anthranilate phosphoribosyltransferase from Aquifex aeolicus (strain VF5).